A 55-amino-acid polypeptide reads, in one-letter code: Neurotoxin B-IV (55 aa).

Proline 10 is subject to Hydroxyproline. Cystine bridges form between cysteine 12-cysteine 52, cysteine 16-cysteine 48, cysteine 23-cysteine 41, and cysteine 26-cysteine 37.

This sequence belongs to the worm B-toxin family.

It is found in the secreted. Its function is as follows. This toxin increases the excitability of nerves by delaying the inactivation of the voltage-gated sodium channel (Nav). Only acts on some crustacean. Is more abundant, but 15-fold less toxic than neurotoxin B-II. This is Neurotoxin B-IV from Cerebratulus lacteus (Milky ribbon worm).